A 273-amino-acid chain; its full sequence is 2,3,4,5-tetrahydropyridine-2,6-dicarboxylate N-succinyltransferase (273 aa).

Substrate is bound by residues R105 and D142.

It belongs to the transferase hexapeptide repeat family. As to quaternary structure, homotrimer.

It localises to the cytoplasm. The catalysed reaction is (S)-2,3,4,5-tetrahydrodipicolinate + succinyl-CoA + H2O = (S)-2-succinylamino-6-oxoheptanedioate + CoA. Its pathway is amino-acid biosynthesis; L-lysine biosynthesis via DAP pathway; LL-2,6-diaminopimelate from (S)-tetrahydrodipicolinate (succinylase route): step 1/3. The chain is 2,3,4,5-tetrahydropyridine-2,6-dicarboxylate N-succinyltransferase from Bordetella bronchiseptica (strain ATCC BAA-588 / NCTC 13252 / RB50) (Alcaligenes bronchisepticus).